A 768-amino-acid chain; its full sequence is Translation factor GUF1 homolog, mitochondrial (768 aa).

The transit peptide at 1–29 directs the protein to the mitochondrion; the sequence is MRLWNRFSRLGNLLCACAACGCSFTPWRC. Residues 110–293 enclose the tr-type G domain; that stretch reads SNIRNVAVVA…AIIERVPSPS (184 aa). GTP contacts are provided by residues 119–126, 184–188, and 238–241; these read AHVDHGKT, DTPGH, and TKMD.

It belongs to the TRAFAC class translation factor GTPase superfamily. Classic translation factor GTPase family. LepA subfamily.

Its subcellular location is the mitochondrion inner membrane. It catalyses the reaction GTP + H2O = GDP + phosphate + H(+). In terms of biological role, promotes mitochondrial protein synthesis. May act as a fidelity factor of the translation reaction, by catalyzing a one-codon backward translocation of tRNAs on improperly translocated ribosomes. Binds to mitochondrial ribosomes in a GTP-dependent manner. The sequence is that of Translation factor GUF1 homolog, mitochondrial from Trypanosoma brucei brucei (strain 927/4 GUTat10.1).